Here is a 340-residue protein sequence, read N- to C-terminus: Protein-arginine kinase (340 aa).

The Phosphagen kinase C-terminal domain maps to 14-241; it reads IVLSSRIRLA…YQIINQEKLA (228 aa). ATP-binding positions include 17 to 21, arginine 112, 163 to 167, and 194 to 199; these read SSRIR, RASVM, and RGIYGE.

It belongs to the ATP:guanido phosphotransferase family.

The catalysed reaction is L-arginyl-[protein] + ATP = N(omega)-phospho-L-arginyl-[protein] + ADP + H(+). Its function is as follows. Catalyzes the specific phosphorylation of arginine residues in proteins. The sequence is that of Protein-arginine kinase from Clostridium tetani (strain Massachusetts / E88).